The chain runs to 315 residues: Homoserine kinase (315 aa).

97–107 (PPARGLGSSAT) lines the ATP pocket.

The protein belongs to the GHMP kinase family. Homoserine kinase subfamily.

It localises to the cytoplasm. The enzyme catalyses L-homoserine + ATP = O-phospho-L-homoserine + ADP + H(+). It participates in amino-acid biosynthesis; L-threonine biosynthesis; L-threonine from L-aspartate: step 4/5. Functionally, catalyzes the ATP-dependent phosphorylation of L-homoserine to L-homoserine phosphate. In Prochlorococcus marinus (strain NATL2A), this protein is Homoserine kinase.